The following is a 147-amino-acid chain: MKAVLILGLLLLSVTVQGKKFEKCELARTLRRYGLDGYKGVSLANWMCLTYGESRYNTRVTNYNPGSKSTDYGIFQINSKWWCNDGKTPKAVNGCGVSCSAMLKDDITQAVACAKTIVSRQGITAWVAWKNKCRNRDVSSYIRGCKL.

An N-terminal signal peptide occupies residues 1–18; that stretch reads MKAVLILGLLLLSVTVQG. One can recognise a C-type lysozyme domain in the interval 19-147; that stretch reads KKFEKCELAR…VSSYIRGCKL (129 aa). Disulfide bonds link cysteine 24/cysteine 145, cysteine 48/cysteine 133, cysteine 83/cysteine 99, and cysteine 95/cysteine 113. Catalysis depends on residues glutamate 53 and aspartate 71.

The protein belongs to the glycosyl hydrolase 22 family.

It catalyses the reaction Hydrolysis of (1-&gt;4)-beta-linkages between N-acetylmuramic acid and N-acetyl-D-glucosamine residues in a peptidoglycan and between N-acetyl-D-glucosamine residues in chitodextrins.. In terms of biological role, lysozymes have primarily a bacteriolytic function; those in tissues and body fluids are associated with the monocyte-macrophage system and enhance the activity of immunoagents. The sequence is that of Lysozyme C, intestinal isozyme from Bos taurus (Bovine).